An 875-amino-acid chain; its full sequence is Ectonucleotide pyrophosphatase/phosphodiesterase family member 3 (875 aa).

At 1–11 (MDSRLALATEE) the chain is on the cytoplasmic side. A helical; Signal-anchor for type II membrane protein membrane pass occupies residues 12–30 (PIKKDSLKRYKILCAVLLA). The Extracellular segment spans residues 31-875 (LLVIVSLGLG…TYLPTFETII (845 aa)). 2 consecutive SMB domains span residues 51-94 (HIGS…VKST) and 95-139 (QIWT…GEVP). 10 cysteine pairs are disulfide-bonded: C55–C72, C59–C90, C70–C83, C76–C82, C99–C116, C104–C134, C114–C127, C120–C126, C145–C191, and C153–C365. Positions 79 to 81 (RGD) match the Cell attachment site motif. The interval 161–545 (PVILFSMDGF…HGSLNHLLKA (385 aa)) is phosphodiesterase. D168 provides a ligand contact to Zn(2+). K205 contributes to the ATP binding site. T206 provides a ligand contact to Zn(2+). T206 acts as the Nucleophile in catalysis. N227 is a binding site for ATP. N237 carries N-linked (GlcNAc...) asparagine glycosylation. D276 is an ATP binding site. N-linked (GlcNAc...) asparagine glycosylation is found at N280 and N289. Residue Y290 participates in ATP binding. The Zn(2+) site is built by D326, H330, D373, and H374. 6 cysteine pairs are disulfide-bonded: C381-C478, C429-C818, C562-C623, C575-C679, C577-C664, and C787-C797. Position 483 (H483) interacts with Zn(2+). 4 N-linked (GlcNAc...) asparagine glycosylation sites follow: N533, N574, N594, and N702. The segment at 582–875 (TSGQEEQVNQ…TYLPTFETII (294 aa)) is nuclease. Residues D752, N754, D756, H758, and D760 each contribute to the Ca(2+) site. N-linked (GlcNAc...) asparagine glycosylation is present at N789.

Belongs to the nucleotide pyrophosphatase/phosphodiesterase family. Monomer and homodimer. Zn(2+) serves as cofactor. The N-terminal is blocked. Post-translationally, N-glycosylated. N-glycosylation is necessary for normal transport to the cell membrane, but is not the apical targeting signal. Detected in intestinal epithelium and liver (at protein level).

Its subcellular location is the cell membrane. It is found in the apical cell membrane. It localises to the secreted. It catalyses the reaction Hydrolytically removes 5'-nucleotides successively from the 3'-hydroxy termini of 3'-hydroxy-terminated oligonucleotides.. It carries out the reaction a ribonucleoside 5'-triphosphate + H2O = a ribonucleoside 5'-phosphate + diphosphate + H(+). The catalysed reaction is ATP + H2O = AMP + diphosphate + H(+). The enzyme catalyses CTP + H2O = CMP + diphosphate + H(+). It catalyses the reaction GTP + H2O = GMP + diphosphate + H(+). It carries out the reaction UTP + H2O = UMP + diphosphate + H(+). The catalysed reaction is UDP-N-acetyl-alpha-D-glucosamine + H2O = N-acetyl-alpha-D-glucosamine 1-phosphate + UMP + 2 H(+). The enzyme catalyses P(1),P(3)-bis(5'-adenosyl) triphosphate + H2O = AMP + ADP + 2 H(+). It catalyses the reaction P(1),P(4)-bis(5'-adenosyl) tetraphosphate + H2O = AMP + ATP + 2 H(+). It carries out the reaction P(1),P(5)-bis(5'-adenosyl) pentaphosphate + H2O = adenosine 5'-tetraphosphate + AMP + 2 H(+). The catalysed reaction is P(1),P(4)-bis(5'-guanosyl) tetraphosphate + H2O = GMP + GTP + 2 H(+). Hydrolase that metabolizes extracellular nucleotides, including ATP, GTP, UTP and CTP. Limits mast cells and basophils response during inflammation and during the chronic phases of allergic responses by eliminating extracellular ATP, a signaling molecule activating these cells in an autocrine manner. Metabolizes extracellular ATP in the lumen of the small intestine, and thereby prevents ATP-induced apoptosis of intestinal plasmacytoid dendritic cells. Has a broad specificity and can also hydrolyze UDP-GlcNAc into UMP and GlcNAc-1-phosphate and potentially several other intracellular nucleotide sugars, including UDP-GalNAc, CMP-NeuAc, GDP-Fuc, and UDP-GlcA. Thereby, could modulate glycan biosynthesis and protein glycosylation. Can hydrolyze extracellular dinucleoside polyphosphates, including the vasoactive adenosine polyphosphates as well. In addition, displays an alkaline phosphodiesterase activity in vitro. This chain is Ectonucleotide pyrophosphatase/phosphodiesterase family member 3, found in Rattus norvegicus (Rat).